Consider the following 273-residue polypeptide: Diaminopimelate epimerase (273 aa).

Residues Asn11 and Asn60 each contribute to the substrate site. Cys69 functions as the Proton donor in the catalytic mechanism. Substrate is bound by residues 70–71 (GN), Asn181, and 199–200 (ER). Cys209 (proton acceptor) is an active-site residue. Residue 210 to 211 (GT) participates in substrate binding.

It belongs to the diaminopimelate epimerase family. In terms of assembly, homodimer.

Its subcellular location is the cytoplasm. The catalysed reaction is (2S,6S)-2,6-diaminopimelate = meso-2,6-diaminopimelate. It participates in amino-acid biosynthesis; L-lysine biosynthesis via DAP pathway; DL-2,6-diaminopimelate from LL-2,6-diaminopimelate: step 1/1. Catalyzes the stereoinversion of LL-2,6-diaminopimelate (L,L-DAP) to meso-diaminopimelate (meso-DAP), a precursor of L-lysine and an essential component of the bacterial peptidoglycan. The polypeptide is Diaminopimelate epimerase (Helicobacter pylori (strain ATCC 700392 / 26695) (Campylobacter pylori)).